We begin with the raw amino-acid sequence, 290 residues long: Endoplasmic reticulum-Golgi intermediate compartment protein 1 (290 aa).

At 1-27 (MSFDVRRFDIYRKVPKDLTQPTYTGAF) the chain is on the cytoplasmic side. The helical transmembrane segment at 28 to 48 (ISICCCVFMLFLFLSELTGFI) threads the bilayer. The Lumenal segment spans residues 49–254 (ATEIVNELYV…RRRPFYRFIT (206 aa)). N-linked (GlcNAc...) asparagine glycosylation occurs at N74. Residues 255 to 275 (TICAIIGGTFTVAGIIDSCIF) traverse the membrane as a helical segment. Residues 276–290 (TASEAWKKIQIGKMS) are Cytoplasmic-facing.

Belongs to the ERGIC family.

Its subcellular location is the endoplasmic reticulum membrane. It localises to the endoplasmic reticulum-Golgi intermediate compartment membrane. The protein resides in the golgi apparatus membrane. Possible role in transport between endoplasmic reticulum and Golgi. The polypeptide is Endoplasmic reticulum-Golgi intermediate compartment protein 1 (ergic1) (Danio rerio (Zebrafish)).